A 366-amino-acid polypeptide reads, in one-letter code: ABI gene family member 3 (366 aa).

A coiled-coil region spans residues 33–61 (CEDNYVQATDKRKALEETMAFTTQALASV). Positions 161–195 (SRTGTLSRKSIKAPATPASATLGRPPRIPEPVHLP) are disordered. Phosphoserine is present on residues serine 213 and serine 216. The tract at residues 215-302 (GSAEGVGGAP…PPPGFGPDEP (88 aa)) is disordered. Residues 232 to 248 (PPAPPLPSSLDPPPPPA) show a composition bias toward pro residues. The region spanning 308–366 (SYLEKVVTLYPYTSQKDNELSFSEGTVICVTRRYSDGWCEGVSSEGTGFFPGNYVEPSC) is the SH3 domain. Position 342 is a phosphoserine (serine 342).

It belongs to the ABI family. May interact with PAK1 and PAK2. Probably interacts with TARSH. Expressed in heart, lung, liver, pancreas, kidney, placenta and at low levels in brain and skeletal muscle.

It localises to the cytoplasm. Its function is as follows. May inhibit tumor metastasis. In vitro, reduces cell motility. This is ABI gene family member 3 (ABI3) from Homo sapiens (Human).